A 195-amino-acid chain; its full sequence is Imidazoleglycerol-phosphate dehydratase (195 aa).

This sequence belongs to the imidazoleglycerol-phosphate dehydratase family.

Its subcellular location is the cytoplasm. It carries out the reaction D-erythro-1-(imidazol-4-yl)glycerol 3-phosphate = 3-(imidazol-4-yl)-2-oxopropyl phosphate + H2O. Its pathway is amino-acid biosynthesis; L-histidine biosynthesis; L-histidine from 5-phospho-alpha-D-ribose 1-diphosphate: step 6/9. The protein is Imidazoleglycerol-phosphate dehydratase of Frankia casuarinae (strain DSM 45818 / CECT 9043 / HFP020203 / CcI3).